An 802-amino-acid chain; its full sequence is Copper-exporting P-type ATPase (802 aa).

HMA domains follow at residues 5–70 (KKTT…YGVT) and 72–138 (ETVE…YDAS). C16, C19, C83, and C86 together coordinate Cu(+). The next 6 membrane-spanning stretches (helical) occupy residues 161-181 (LIIS…HLFN), 192-212 (WFQF…FYVG), 224-244 (MDVL…YEMV), 256-276 (LYFE…YLEA), 411-431 (YFVP…ITLV), and 438-458 (PALV…LGLA). D495 acts as the 4-aspartylphosphate intermediate in catalysis. Mg(2+) contacts are provided by D690 and D694. The next 2 membrane-spanning stretches (helical) occupy residues 748 to 767 (LFWA…LGLL) and 771 to 790 (VAGA…ALRL).

This sequence belongs to the cation transport ATPase (P-type) (TC 3.A.3) family. Type IB subfamily.

The protein localises to the cell membrane. The enzyme catalyses Cu(+)(in) + ATP + H2O = Cu(+)(out) + ADP + phosphate + H(+). Involved in copper export. The polypeptide is Copper-exporting P-type ATPase (copA) (Staphylococcus aureus (strain N315)).